The chain runs to 39 residues: Phosphatase RapI inhibitor (39 aa).

The propeptide occupies 1–34; sequence MKISRILLAAVILSSVFSITYLQSDHNTEIKVAA.

It belongs to the Phr family. Contains a predicted signal peptide cleavage site in the N-terminal region, however the propeptide is probably subject to only one processing event, at the N-terminal end of the mature peptide.

It localises to the secreted. Its subcellular location is the cytoplasm. Its function is as follows. Intercellular signaling molecule that inhibits excision of the mobile genetic element ICEBs1 when cells are crowded by cells that contain ICEBs1 and produce the PhrI peptide. Secreted during production, but the mature peptide acts intracellularly, indicating that it needs to be imported into the cell to function. Acts by inhibiting RapI activity. This Bacillus subtilis (strain 168) protein is Phosphatase RapI inhibitor (phrI).